Here is a 310-residue protein sequence, read N- to C-terminus: Aspartate carbamoyltransferase catalytic subunit (310 aa).

Positions 57 and 58 each coordinate carbamoyl phosphate. Lysine 86 provides a ligand contact to L-aspartate. Residues arginine 107, histidine 135, and glutamine 138 each contribute to the carbamoyl phosphate site. Arginine 168 and arginine 229 together coordinate L-aspartate. The carbamoyl phosphate site is built by leucine 268 and proline 269.

This sequence belongs to the aspartate/ornithine carbamoyltransferase superfamily. ATCase family. Heterooligomer of catalytic and regulatory chains.

It carries out the reaction carbamoyl phosphate + L-aspartate = N-carbamoyl-L-aspartate + phosphate + H(+). Its pathway is pyrimidine metabolism; UMP biosynthesis via de novo pathway; (S)-dihydroorotate from bicarbonate: step 2/3. Functionally, catalyzes the condensation of carbamoyl phosphate and aspartate to form carbamoyl aspartate and inorganic phosphate, the committed step in the de novo pyrimidine nucleotide biosynthesis pathway. The sequence is that of Aspartate carbamoyltransferase catalytic subunit from Thermococcus kodakarensis (strain ATCC BAA-918 / JCM 12380 / KOD1) (Pyrococcus kodakaraensis (strain KOD1)).